Consider the following 296-residue polypeptide: N-acetylmuramic acid 6-phosphate etherase (296 aa).

An SIS domain is found at 54–217 (VTESFRKGGR…STTSMVGIGK (164 aa)). The Proton donor role is filled by glutamate 82. Glutamate 113 is a catalytic residue.

The protein belongs to the GCKR-like family. MurNAc-6-P etherase subfamily. As to quaternary structure, homodimer.

It carries out the reaction N-acetyl-D-muramate 6-phosphate + H2O = N-acetyl-D-glucosamine 6-phosphate + (R)-lactate. Its pathway is amino-sugar metabolism; N-acetylmuramate degradation. Functionally, specifically catalyzes the cleavage of the D-lactyl ether substituent of MurNAc 6-phosphate, producing GlcNAc 6-phosphate and D-lactate. The sequence is that of N-acetylmuramic acid 6-phosphate etherase from Listeria welshimeri serovar 6b (strain ATCC 35897 / DSM 20650 / CCUG 15529 / CIP 8149 / NCTC 11857 / SLCC 5334 / V8).